A 137-amino-acid chain; its full sequence is Peptide methionine sulfoxide reductase MsrB (137 aa).

In terms of domain architecture, MsrB spans 7 to 129 (AEELKKNLSE…NSASLRFTDG (123 aa)). Residues cysteine 46, cysteine 49, cysteine 95, and cysteine 98 each coordinate Zn(2+). Cysteine 118 serves as the catalytic Nucleophile.

It belongs to the MsrB Met sulfoxide reductase family. Zn(2+) serves as cofactor.

The enzyme catalyses L-methionyl-[protein] + [thioredoxin]-disulfide + H2O = L-methionyl-(R)-S-oxide-[protein] + [thioredoxin]-dithiol. This Escherichia coli O8 (strain IAI1) protein is Peptide methionine sulfoxide reductase MsrB.